The following is a 173-amino-acid chain: Crossover junction endodeoxyribonuclease RuvC (173 aa).

Residues aspartate 8, glutamate 67, and aspartate 139 contribute to the active site. Mg(2+) contacts are provided by aspartate 8, glutamate 67, and aspartate 139.

The protein belongs to the RuvC family. As to quaternary structure, homodimer which binds Holliday junction (HJ) DNA. The HJ becomes 2-fold symmetrical on binding to RuvC with unstacked arms; it has a different conformation from HJ DNA in complex with RuvA. In the full resolvosome a probable DNA-RuvA(4)-RuvB(12)-RuvC(2) complex forms which resolves the HJ. Requires Mg(2+) as cofactor.

It localises to the cytoplasm. The enzyme catalyses Endonucleolytic cleavage at a junction such as a reciprocal single-stranded crossover between two homologous DNA duplexes (Holliday junction).. Its function is as follows. The RuvA-RuvB-RuvC complex processes Holliday junction (HJ) DNA during genetic recombination and DNA repair. Endonuclease that resolves HJ intermediates. Cleaves cruciform DNA by making single-stranded nicks across the HJ at symmetrical positions within the homologous arms, yielding a 5'-phosphate and a 3'-hydroxyl group; requires a central core of homology in the junction. The consensus cleavage sequence is 5'-(A/T)TT(C/G)-3'. Cleavage occurs on the 3'-side of the TT dinucleotide at the point of strand exchange. HJ branch migration catalyzed by RuvA-RuvB allows RuvC to scan DNA until it finds its consensus sequence, where it cleaves and resolves the cruciform DNA. The protein is Crossover junction endodeoxyribonuclease RuvC of Shewanella woodyi (strain ATCC 51908 / MS32).